Here is a 380-residue protein sequence, read N- to C-terminus: 3-dehydroquinate synthase (380 aa).

Residues 118–122 (GVIGD), 142–143 (TS), K155, and K164 each bind NAD(+). E197, H259, and H278 together coordinate Zn(2+).

The protein belongs to the sugar phosphate cyclases superfamily. Dehydroquinate synthase family. Co(2+) serves as cofactor. It depends on Zn(2+) as a cofactor. Requires NAD(+) as cofactor.

It localises to the cytoplasm. It catalyses the reaction 7-phospho-2-dehydro-3-deoxy-D-arabino-heptonate = 3-dehydroquinate + phosphate. It participates in metabolic intermediate biosynthesis; chorismate biosynthesis; chorismate from D-erythrose 4-phosphate and phosphoenolpyruvate: step 2/7. In terms of biological role, catalyzes the conversion of 3-deoxy-D-arabino-heptulosonate 7-phosphate (DAHP) to dehydroquinate (DHQ). The sequence is that of 3-dehydroquinate synthase from Sinorhizobium medicae (strain WSM419) (Ensifer medicae).